The chain runs to 429 residues: Melanoma-associated antigen 11 (429 aa).

Disordered regions lie at residues 1-30 (METQ…GDFG) and 188-215 (IFGS…IDPE). Positions 194–209 (DEGSGSQEKEGPSTSP) are enriched in polar residues. An MAGE domain is found at 222–421 (LHDKIIDLVH…TSYPSLYEDA (200 aa)).

In terms of tissue distribution, expressed in tumors of several types, such as melanoma, head and neck squamous cell carcinoma, lung carcinoma and breast carcinoma. Expressed in testis, ovary, prostate, cancerous prostate, breast and adrenal tissue.

Its subcellular location is the nucleus. It localises to the cytoplasm. Its function is as follows. Acts as androgen receptor coregulator that increases androgen receptor activity by modulating the receptors interdomain interaction. May play a role in embryonal development and tumor transformation or aspects of tumor progression. The chain is Melanoma-associated antigen 11 from Homo sapiens (Human).